The following is a 493-amino-acid chain: Lysostaphin (493 aa).

The first 23 residues, 1–23 (MKKTKNNYYTRPLAIGLSTFALA), serve as a signal peptide directing secretion. Residues 24–247 (SIVYGGIQNE…ALVQNRTALR (224 aa)) constitute a propeptide that is removed on maturation. 14 repeat units span residues 49-61 (AEVE…VENT), 62-74 (AEVE…VENT), 75-87 (AEVE…VENT), 88-100 (AEVE…VENT), 101-113 (AEVE…VENT), 114-126 (AEVE…VENT), 127-139 (AEVE…VENT), 140-152 (AEVE…VENT), 153-165 (AEVE…VENT), 166-178 (AEVE…VENT), 179-191 (AEVE…VENT), 192-204 (AEVE…VENT), 205-217 (AEVE…VENT), and 218-230 (AEVE…VENT). Residues 49–243 (AEVETSKAPV…ETSKALVQNR (195 aa)) are 15 X 13 AA approximate tandem repeats of A-E-V-E-T-S-K-A-P-V-E-N-T. The disordered stretch occupies residues 52-232 (ETSKAPVENT…SKAPVENTAE (181 aa)). The stretch at 231 to 243 (AEVETSKALVQNR) is one 15; approximate repeat. Zn(2+) is bound by residues His-279 and Asp-283. His-360 is a catalytic residue. Residue His-362 coordinates Zn(2+). The region spanning 413 to 481 (SESASFTPNT…YLPVRTWNKS (69 aa)) is the SH3b domain.

The protein belongs to the peptidase M23B family. As to quaternary structure, monomer. Zn(2+) is required as a cofactor.

Its subcellular location is the secreted. The enzyme catalyses Hydrolysis of the -Gly-|-Gly- bond in the pentaglycine inter-peptide link joining staphylococcal cell wall peptidoglycans.. Functionally, lyses staphylococcal cells by hydrolyzing the polyglycine interpeptide bridges of the peptidoglycan. The sequence is that of Lysostaphin (lss) from Staphylococcus simulans.